Here is a 1637-residue protein sequence, read N- to C-terminus: Probable serine/threonine-protein kinase gdt2 (1637 aa).

An N-terminal signal peptide occupies residues 1–19 (MNYILYILLILIIFSINNT). Over 20–896 (FSIGSFVYTP…IPVEKINLLP (877 aa)) the chain is Extracellular. Residues 897-917 (IIVPICVTVLVLLSILIVFFG) form a helical membrane-spanning segment. Over 918–1637 (ARYYKHKKRR…NNNNNNNNNN (720 aa)) the chain is Cytoplasmic. A compositionally biased stretch (polar residues) spans 977–990 (SDIQTQSENNNLEP). The interval 977 to 1000 (SDIQTQSENNNLEPTTVETTTTTT) is disordered. Residues 991 to 1000 (TTVETTTTTT) show a composition bias toward low complexity. The region spanning 1290–1547 (IIIKNYISEG…LSKYLKHLLK (258 aa)) is the Protein kinase domain. ATP contacts are provided by residues 1296–1304 (ISEGTFGIV) and Lys1317. Asp1408 serves as the catalytic Proton acceptor. Residues 1557-1637 (DKDKKNKKKN…NNNNNNNNNN (81 aa)) are disordered. Composition is skewed to low complexity over residues 1568–1589 (NNNNNNNNNNNNNNNNNNNNNN) and 1597–1637 (NNNI…NNNN).

The protein in the N-terminal section; belongs to the GDT family. It in the C-terminal section; belongs to the protein kinase superfamily. TKL Ser/Thr protein kinase family.

It localises to the membrane. It catalyses the reaction L-seryl-[protein] + ATP = O-phospho-L-seryl-[protein] + ADP + H(+). The catalysed reaction is L-threonyl-[protein] + ATP = O-phospho-L-threonyl-[protein] + ADP + H(+). Its function is as follows. Regulates the transition between growth and differentiation. The chain is Probable serine/threonine-protein kinase gdt2 (gdt2) from Dictyostelium discoideum (Social amoeba).